A 113-amino-acid polypeptide reads, in one-letter code: RING-box protein 2 (113 aa).

A disordered region spans residues 1–26; the sequence is MADVEDGEEPCVLSSHSGSAGSKSGG. A2 is subject to N-acetylalanine. C50, C53, C61, C64, C73, C80, H82, H85, C87, C88, C99, and C102 together coordinate Zn(2+). The segment at 61-103 adopts an RING-type zinc-finger fold; the sequence is CLRCQAENKQEDCVVVWGECNHSFHNCCMSLWVKQNNRCPLCQ.

This sequence belongs to the RING-box family. Catalytic component of multiple cullin-5-RING E3 ubiquitin-protein ligase complexes (ECS complexes, also named CRL5 complexes) composed of CUL5, Elongin BC (ELOB and ELOC), RNF7/RBX2 and a variable SOCS box domain-containing protein as substrate-specific recognition component. Also interacts (with lower preference) with CUL1, CUL2, CUL3, CUL4A and CUL4B; additional evidence is however required to confirm this result in vivo. Interacts with UBE2F. Interacts with CSNK2B, the interaction is not affected by phosphorylation by CK2. May also interact with DCUN1D1, DCUN1D2, DCUN1D3, DCUN1D4 and DCUN1D5.

It is found in the cytoplasm. The protein resides in the nucleus. The catalysed reaction is S-ubiquitinyl-[E2 ubiquitin-conjugating enzyme]-L-cysteine + [acceptor protein]-L-lysine = [E2 ubiquitin-conjugating enzyme]-L-cysteine + N(6)-ubiquitinyl-[acceptor protein]-L-lysine.. It carries out the reaction S-[NEDD8-protein]-yl-[E2 NEDD8-conjugating enzyme]-L-cysteine + [cullin]-L-lysine = [E2 NEDD8-conjugating enzyme]-L-cysteine + N(6)-[NEDD8-protein]-yl-[cullin]-L-lysine.. The protein operates within protein modification; protein ubiquitination. It functions in the pathway protein modification; protein neddylation. Functionally, catalytic component of multiple cullin-5-RING E3 ubiquitin-protein ligase complexes (ECS complexes), which mediate the ubiquitination and subsequent proteasomal degradation of target proteins. It is thereby involved in various biological processes, such as cell cycle progression, signal transduction and transcription. The functional specificity of the E3 ubiquitin-protein ligase ECS complexes depend on the variable SOCS box-containing substrate recognition component. Within ECS complexes, RNF7/RBX2 recruits the E2 ubiquitination enzyme to the complex via its RING-type and brings it into close proximity to the substrate. Catalytic subunit of various SOCS-containing ECS complexes, such as the ECS(SOCS7) complex, that regulate reelin signaling by mediating ubiquitination and degradation of DAB1. The ECS(SOCS2) complex mediates the ubiquitination and subsequent proteasomal degradation of phosphorylated EPOR and GHR. Promotes ubiquitination and degradation of NF1, thereby regulating Ras protein signal transduction. As part of the ECS(ASB9) complex, catalyzes ubiquitination and degradation of CKB. The ECS(SPSB3) complex catalyzes ubiquitination of nuclear CGAS. As part of the ECS(RAB40C) complex, mediates ANKRD28 ubiquitination and degradation, thereby inhibiting protein phosphatase 6 (PP6) complex activity and focal adhesion assembly during cell migration. As part of some ECS complex, catalyzes 'Lys-11'-linked ubiquitination and degradation of BTRC. ECS complexes and ARIH2 collaborate in tandem to mediate ubiquitination of target proteins; ARIH2 mediating addition of the first ubiquitin on CRLs targets. Specifically catalyzes the neddylation of CUL5 via its interaction with UBE2F. Does not catalyze neddylation of other cullins (CUL1, CUL2, CUL3, CUL4A or CUL4B). May play a role in protecting cells from apoptosis induced by redox agents. This Mus musculus (Mouse) protein is RING-box protein 2.